A 402-amino-acid polypeptide reads, in one-letter code: Argininosuccinate synthase (402 aa).

Residues 9 to 17 (AYSGGLDTS) and A36 contribute to the ATP site. Y87 and S92 together coordinate L-citrulline. G117 lines the ATP pocket. The L-aspartate site is built by T119, N123, and D124. N123 lines the L-citrulline pocket. The L-citrulline site is built by R127, S176, S185, E261, and Y273.

This sequence belongs to the argininosuccinate synthase family. Type 1 subfamily. Homotetramer.

The protein localises to the cytoplasm. The enzyme catalyses L-citrulline + L-aspartate + ATP = 2-(N(omega)-L-arginino)succinate + AMP + diphosphate + H(+). It participates in amino-acid biosynthesis; L-arginine biosynthesis; L-arginine from L-ornithine and carbamoyl phosphate: step 2/3. This is Argininosuccinate synthase from Deinococcus radiodurans (strain ATCC 13939 / DSM 20539 / JCM 16871 / CCUG 27074 / LMG 4051 / NBRC 15346 / NCIMB 9279 / VKM B-1422 / R1).